Consider the following 388-residue polypeptide: MSEKFFEIFEKKLEKLKEQNLYRSVKDMESRHGMEITIQGKKYINFASNDYLGLSQHPLVKEAGIDAIKTFGAGGGASRLLSGGTILHRKLEELLSEFKNTESCLILNSGYTANTSLIPALAGENDIIFSDELNHASIIDGCRLSRAEKIIYKHADIEDLKKLIRNISCKGKKVIITDTVFSMDGDIAPIRELYELCKAEGALLYIDDAHGTGVLGNGYGILKHLGLQTEAFVIQMGTLSKAIGVFGAFVCGDSSIIDWFINSARGFIFSTSLPPSTVASAYASLKIIMEDKELIKRLWQNIEKVMEIIKNLELKTTKTQTPIIPILFENIEQAIKASRILYDSGIYAPVIRPPTVKTPRIRITITAGHSDNDIEKLSGALTLLNSIF.

Substrate is bound at residue Arg23. 110 to 111 is a pyridoxal 5'-phosphate binding site; that stretch reads GY. His135 contacts substrate. Residues Ser182, 207–210, and 238–241 each bind pyridoxal 5'-phosphate; these read DDAH and TLSK. N6-(pyridoxal phosphate)lysine is present on Lys241. Thr355 is a substrate binding site.

It belongs to the class-II pyridoxal-phosphate-dependent aminotransferase family. BioF subfamily. As to quaternary structure, homodimer. The cofactor is pyridoxal 5'-phosphate.

The enzyme catalyses 6-carboxyhexanoyl-[ACP] + L-alanine + H(+) = (8S)-8-amino-7-oxononanoate + holo-[ACP] + CO2. Its pathway is cofactor biosynthesis; biotin biosynthesis. Catalyzes the decarboxylative condensation of pimeloyl-[acyl-carrier protein] and L-alanine to produce 8-amino-7-oxononanoate (AON), [acyl-carrier protein], and carbon dioxide. The sequence is that of Putative 8-amino-7-oxononanoate synthase (bioF) from Thermodesulfovibrio yellowstonii (strain ATCC 51303 / DSM 11347 / YP87).